We begin with the raw amino-acid sequence, 1037 residues long: Sodium/potassium exporting P-type ATPase cta3 (1037 aa).

At 1–61 (MVTINISNPV…GVSAWKVLLR (61 aa)) the chain is on the cytoplasmic side. Residues 62 to 82 (QVLNAMCVVLILAAALSFGTT) traverse the membrane as a helical segment. Residue Asp83 is a topological domain, extracellular. A helical transmembrane segment spans residues 84 to 104 (WIEGGVISAIIVLNITVGFIQ). The Cytoplasmic portion of the chain corresponds to 105 to 281 (EYKAEKTMDS…LNVGTPLQRK (177 aa)). Residues 282–302 (LTVLAYILFCIAIILAIIVMA) form a helical membrane-spanning segment. The Extracellular portion of the chain corresponds to 303–313 (AHSFHVTNEVS). The helical transmembrane segment at 314–334 (IYAISLGISIIPESLIAVLSI) threads the bilayer. Topologically, residues 335–760 (TMAMGQKNMS…GRRMFDNIMR (426 aa)) are cytoplasmic. Asp368 acts as the 4-aspartylphosphate intermediate in catalysis. Mg(2+)-binding residues include Asp368 and Thr370. ATP is bound by residues Thr370, Glu468, Lys520, Arg559, Thr620, Gly621, Asp622, Arg678, and Lys684. Asp703 is a Mg(2+) binding site. Asn706 contacts ATP. The helical transmembrane segment at 761–781 (FVLHLLVSNVGEVILLVVGLA) threads the bilayer. Residues 782–787 (FRDEVH) are Extracellular-facing. Residues 788–808 (LSVFPMSPVEILWCNMITSSF) traverse the membrane as a helical segment. The Cytoplasmic segment spans residues 809 to 844 (PSMGLGMELAQPDVMERLPHDNKVGIFQKSLIVDMM). The chain crosses the membrane as a helical span at residues 845 to 865 (VYGFFLGVVSLMTWVVIMYGF). Over 866-889 (GTGNLSYDCNAHYHAGCNDVFKAR) the chain is Extracellular. A glycan (N-linked (GlcNAc...) asparagine) is linked at Asn869. A helical transmembrane segment spans residues 890 to 910 (SAVFAVVTFCILIMAVEVKNF). Over 911-939 (DNSLFNLHGIPWGEWNFRYFLHTLVENKF) the chain is Cytoplasmic. Residues 940-960 (LAWAIALAAVSVFPTIYIPVI) traverse the membrane as a helical segment. At 961 to 969 (NRDVFKHTY) the chain is on the extracellular side. A helical membrane pass occupies residues 970–990 (IGWEWGVVAVAVMFYFFYVEI). The Cytoplasmic portion of the chain corresponds to 991-1037 (WKSIRRSLTNPQKKGKFRRTLSNTITTESKLSEKDLEHRLFLQSRRA). Ser1012 is modified (phosphoserine).

The protein belongs to the cation transport ATPase (P-type) (TC 3.A.3) family. Type IID subfamily. Requires Mg(2+) as cofactor. Post-translationally, the active site is phosphorylated in presence of sodium or potassium and in conditions of higher pH. Not phosphorylated in presence of calcium ions.

Its subcellular location is the cell membrane. It carries out the reaction Na(+)(in) + ATP + H2O = Na(+)(out) + ADP + phosphate + H(+). It catalyses the reaction K(+)(in) + ATP + H2O = K(+)(out) + ADP + phosphate + H(+). Its function is as follows. Catalyzes the hydrolysis of ATP coupled with the export of sodium and potassium from the cell. May export sodium less efficiently. May transport other cations such as lithium. Sodium/potassium efflux ATPases are involved in salt tolerance and maintaining the membrane potential across the plasma membrane in high salinity (Na+) or alkaline (K+) environments. This is Sodium/potassium exporting P-type ATPase cta3 from Schizosaccharomyces pombe (strain 972 / ATCC 24843) (Fission yeast).